A 552-amino-acid polypeptide reads, in one-letter code: Probable beta-glucosidase btgE (552 aa).

The N-terminal stretch at Met-1 to Ala-18 is a signal peptide. Positions Glu-250–Ala-291 are disordered. Positions Pro-251–Thr-289 are enriched in low complexity. Glu-392 functions as the Proton donor in the catalytic mechanism. Glu-488 (nucleophile) is an active-site residue.

This sequence belongs to the glycosyl hydrolase 17 family.

Its subcellular location is the secreted. The protein localises to the cell wall. It catalyses the reaction Hydrolysis of terminal, non-reducing beta-D-glucosyl residues with release of beta-D-glucose.. It functions in the pathway glycan metabolism; cellulose degradation. Its function is as follows. Beta-glucosidases are one of a number of cellulolytic enzymes involved in the degradation of cellulosic biomass. Catalyzes the last step releasing glucose from the inhibitory cellobiose. The chain is Probable beta-glucosidase btgE (btgE) from Neosartorya fischeri (strain ATCC 1020 / DSM 3700 / CBS 544.65 / FGSC A1164 / JCM 1740 / NRRL 181 / WB 181) (Aspergillus fischerianus).